The primary structure comprises 367 residues: 4-hydroxy-3-methylbut-2-en-1-yl diphosphate synthase (flavodoxin) (367 aa).

Cys-265, Cys-268, Cys-300, and Glu-307 together coordinate [4Fe-4S] cluster.

It belongs to the IspG family. Requires [4Fe-4S] cluster as cofactor.

The catalysed reaction is (2E)-4-hydroxy-3-methylbut-2-enyl diphosphate + oxidized [flavodoxin] + H2O + 2 H(+) = 2-C-methyl-D-erythritol 2,4-cyclic diphosphate + reduced [flavodoxin]. It functions in the pathway isoprenoid biosynthesis; isopentenyl diphosphate biosynthesis via DXP pathway; isopentenyl diphosphate from 1-deoxy-D-xylulose 5-phosphate: step 5/6. Its function is as follows. Converts 2C-methyl-D-erythritol 2,4-cyclodiphosphate (ME-2,4cPP) into 1-hydroxy-2-methyl-2-(E)-butenyl 4-diphosphate. The sequence is that of 4-hydroxy-3-methylbut-2-en-1-yl diphosphate synthase (flavodoxin) from Bacillus anthracis.